The chain runs to 291 residues: Porphobilinogen deaminase (291 aa).

Residue C237 is modified to S-(dipyrrolylmethanemethyl)cysteine.

The protein belongs to the HMBS family. Monomer. Dipyrromethane serves as cofactor.

It carries out the reaction 4 porphobilinogen + H2O = hydroxymethylbilane + 4 NH4(+). Its pathway is porphyrin-containing compound metabolism; protoporphyrin-IX biosynthesis; coproporphyrinogen-III from 5-aminolevulinate: step 2/4. In terms of biological role, tetrapolymerization of the monopyrrole PBG into the hydroxymethylbilane pre-uroporphyrinogen in several discrete steps. This is Porphobilinogen deaminase from Clostridium acetobutylicum (strain ATCC 824 / DSM 792 / JCM 1419 / IAM 19013 / LMG 5710 / NBRC 13948 / NRRL B-527 / VKM B-1787 / 2291 / W).